The following is a 353-amino-acid chain: Abasic site processing protein HMCES (353 aa).

The Nucleophile role is filled by Cys-2. Cys-2 is subject to Thiazolidine linkage to a ring-opened DNA abasic site. Glu-127 is an active-site residue. Residues Lys-148 and Lys-151 each participate in a glycyl lysine isopeptide (Lys-Gly) (interchain with G-Cter in SUMO2) cross-link. Ser-160 bears the Phosphoserine mark. Glycyl lysine isopeptide (Lys-Gly) (interchain with G-Cter in SUMO2) cross-links involve residues Lys-274 and Lys-275. The segment at 292–353 (TKSPKKEVPD…DEPVAKRPNS (62 aa)) is disordered. Position 294 is a phosphoserine (Ser-294). The span at 295–307 (PKKEVPDSPKKDA) shows a compositional bias: basic and acidic residues. A Glycyl lysine isopeptide (Lys-Gly) (interchain with G-Cter in SUMO2) cross-link involves residue Lys-305. Residue Ser-321 is modified to Phosphoserine. The PIP-box motif lies at 332–338 (SLLDRWL). Residues 336–353 (RWLKQEKEDEPVAKRPNS) are compositionally biased toward basic and acidic residues. Glycyl lysine isopeptide (Lys-Gly) (interchain with G-Cter in SUMO2) cross-links involve residues Lys-339 and Lys-342.

Belongs to the SOS response-associated peptidase family. Interacts (via PIP-box motif) with PCNA. In terms of processing, ubiquitinated; the covalent HMCES DNA-protein cross-link is ubiquitinated, leading to its degradation by the proteasome.

The protein localises to the chromosome. With respect to regulation, formation and reversal of DNA-protein cross-link depends on DNA context. Catalyzes formation of the thiazolidine linkage in presence of abasic sites in single-stranded DNA. Mediates the reversal of the thiazolidine cross-link in presence of double stranded DNA. Its function is as follows. Sensor of abasic sites in single-stranded DNA (ssDNA) required to preserve genome integrity by promoting error-free repair of abasic sites. Acts as an enzyme that recognizes and binds abasic sites in ssDNA at replication forks and chemically modifies the lesion by forming a covalent cross-link with DNA: forms a stable thiazolidine linkage between a ring-opened abasic site and the alpha-amino and sulfhydryl substituents of its N-terminal catalytic cysteine residue. Promotes error-free repair by protecting abasic sites from translesion synthesis (TLS) polymerases and endonucleases that are error-prone and would generate mutations and double-strand breaks. The HMCES DNA-protein cross-link is then either reversed or degraded. HMCES is able to catalyze the reversal of its thiazolidine cross-link and cycle between a cross-link and a non-cross-linked state depending on DNA context: mediates self-reversal of the thiazolidine cross-link in double stranded DNA, allowing APEX1 to initiate downstream repair of abasic sites. The HMCES DNA-protein cross-link can also be degraded by the SPRTN metalloprotease following unfolding by the BRIP1/FANCJ helicase. Has preference for ssDNA, but can also accommodate double-stranded DNA with 3' or 5' overhang (dsDNA), and dsDNA-ssDNA 3' junction. Plays a protective role during somatic hypermutation of immunoglobulin genes in B-cells: acts via its ability to form covalent cross-links with abasic sites, thereby limiting the accumulation of deletions in somatic hypermutation target regions. Also involved in class switch recombination (CSR) in B-cells independently of the formation of a DNA-protein cross-link: acts by binding and protecting ssDNA overhangs to promote DNA double-strand break repair through the microhomology-mediated alternative-end-joining (Alt-EJ) pathway. Acts as a protease: mediates autocatalytic processing of its N-terminal methionine in order to expose the catalytic cysteine. The chain is Abasic site processing protein HMCES from Rattus norvegicus (Rat).